We begin with the raw amino-acid sequence, 357 residues long: Probable leucine aminopeptidase MCYG_04170 (357 aa).

The first 15 residues, 1 to 15 (MKVLAALALSALALA), serve as a signal peptide directing secretion. Asn-76 is a glycosylation site (N-linked (GlcNAc...) asparagine). Zn(2+) is bound by residues His-167 and Asp-185. N-linked (GlcNAc...) asparagine glycosylation occurs at Asn-186. Residues Glu-224 and Asp-251 each contribute to the Zn(2+) site. Residues Cys-291 and Cys-295 are joined by a disulfide bond. A Zn(2+)-binding site is contributed by His-324.

Belongs to the peptidase M28 family. M28E subfamily. Monomer. Requires Zn(2+) as cofactor.

Its subcellular location is the secreted. Probable extracellular aminopeptidase which contributes to pathogenicity. In Arthroderma otae (strain ATCC MYA-4605 / CBS 113480) (Microsporum canis), this protein is Probable leucine aminopeptidase MCYG_04170.